Consider the following 549-residue polypeptide: Chaperonin GroEL (549 aa).

ATP-binding positions include 30–33 (TLGP), lysine 51, 87–91 (DGTTT), glycine 415, 479–481 (NAA), and aspartate 495.

It belongs to the chaperonin (HSP60) family. In terms of assembly, forms a cylinder of 14 subunits composed of two heptameric rings stacked back-to-back. Interacts with the co-chaperonin GroES.

The protein localises to the cytoplasm. The catalysed reaction is ATP + H2O + a folded polypeptide = ADP + phosphate + an unfolded polypeptide.. Its function is as follows. Together with its co-chaperonin GroES, plays an essential role in assisting protein folding. The GroEL-GroES system forms a nano-cage that allows encapsulation of the non-native substrate proteins and provides a physical environment optimized to promote and accelerate protein folding. This is Chaperonin GroEL from Stenotrophomonas maltophilia (strain K279a).